We begin with the raw amino-acid sequence, 454 residues long: PC-esterase domain-containing protein 1A (454 aa).

Belongs to the PC-esterase family.

The protein is PC-esterase domain-containing protein 1A (PCED1A) of Homo sapiens (Human).